A 310-amino-acid polypeptide reads, in one-letter code: D-apiose import binding protein (310 aa).

A signal peptide spans 1–21; it reads MKLLKASLVALSLAASTFVYA. Residues Asn-35, 111–112, 158–160, Arg-164, Asn-214, Asp-239, and Gln-260 contribute to the D-apiofuranose site; these read DR and DTN.

It belongs to the bacterial solute-binding protein 2 family.

It is found in the periplasm. Part of an ABC transporter complex involved in D-apiose import. Binds D-apiose, D-ribose and D-ribulose. The protein is D-apiose import binding protein of Actinobacillus succinogenes (strain ATCC 55618 / DSM 22257 / CCUG 43843 / 130Z).